The sequence spans 143 residues: Glycine cleavage system H protein 1 (143 aa).

Residues 26–107 enclose the Lipoyl-binding domain; sequence IYSVGMASIL…PYSSWIAKLK (82 aa). Lysine 67 carries the N6-lipoyllysine modification.

It belongs to the GcvH family. The glycine cleavage system is composed of four proteins: P, T, L and H. It depends on (R)-lipoate as a cofactor.

Functionally, the glycine cleavage system catalyzes the degradation of glycine. The H protein shuttles the methylamine group of glycine from the P protein to the T protein. This chain is Glycine cleavage system H protein 1, found in Aquifex aeolicus (strain VF5).